Here is a 228-residue protein sequence, read N- to C-terminus: 2,3-bisphosphoglycerate-dependent phosphoglycerate mutase (228 aa).

Substrate contacts are provided by residues 8–15 (RHGQSQWN), 21–22 (TG), arginine 60, 87–90 (ERHY), lysine 98, 114–115 (RR), and 180–181 (GN). Histidine 9 (tele-phosphohistidine intermediate) is an active-site residue. Residue glutamate 87 is the Proton donor/acceptor of the active site.

Belongs to the phosphoglycerate mutase family. BPG-dependent PGAM subfamily. Homodimer.

The enzyme catalyses (2R)-2-phosphoglycerate = (2R)-3-phosphoglycerate. It participates in carbohydrate degradation; glycolysis; pyruvate from D-glyceraldehyde 3-phosphate: step 3/5. Catalyzes the interconversion of 2-phosphoglycerate and 3-phosphoglycerate. This chain is 2,3-bisphosphoglycerate-dependent phosphoglycerate mutase, found in Novosphingobium aromaticivorans (strain ATCC 700278 / DSM 12444 / CCUG 56034 / CIP 105152 / NBRC 16084 / F199).